A 193-amino-acid chain; its full sequence is Der GTPase-activating protein YihI (193 aa).

The segment covering 1–12 has biased composition (basic residues); the sequence is MSAKQPNRKPTG. Disordered regions lie at residues 1–91 and 143–193; these read MSAK…KLVM and IIDN…PKKK. The span at 13–26 shows a compositional bias: basic and acidic residues; the sequence is KRKESDASALDGRE. The segment covering 27 to 36 has biased composition (basic residues); the sequence is RKRAAKRKGL. A compositionally biased stretch (polar residues) spans 40–54; sequence SRQQAEQSSKNNNGK. Positions 145–160 are enriched in acidic residues; the sequence is DNDDDEEDDGSFDDAS. Positions 184–193 are enriched in basic and acidic residues; the sequence is PEPKPEPKKK.

Belongs to the YihI family. As to quaternary structure, interacts with Der.

Its function is as follows. A GTPase-activating protein (GAP) that modifies Der/EngA GTPase function. May play a role in ribosome biogenesis. This chain is Der GTPase-activating protein YihI, found in Aeromonas salmonicida (strain A449).